Here is a 338-residue protein sequence, read N- to C-terminus: MAEKIAVLGAGSWGSVLANMLTENGHDVTLWSRNEEQVKQLNTEHTNPRYMKDFVYSTNLTATTDMKKAVKGASVVLIVIPTKGLREVAKQLNAILTELHQKPLVIHATKGLEQNTYKRPSEMLSEDISPENRQAIVVLSGPSHAEDVAIKDMTAVTAACEDLASAKKAQKLFSNSYFRVYTNDDVIGAEFGAALKNIIAIGAGAIQGLGYHDNARAALITRGLAEIRRLGVAFGANPMTFIGLSGVGDLVVTATSKNSRNWRAGYQLGQGKKLQDVIDNMGMVIEGVYTTKAAYELSRKRQVQMPITEALYRVLYEGEDIKTAISQLMDRDLTSENE.

Ser-12, Trp-13, Arg-33, and Lys-110 together coordinate NADPH. Sn-glycerol 3-phosphate is bound by residues Lys-110, Gly-141, and Ser-143. Position 145 (Ala-145) interacts with NADPH. Sn-glycerol 3-phosphate is bound by residues Lys-196, Asp-249, Ser-259, Arg-260, and Asn-261. The active-site Proton acceptor is Lys-196. Arg-260 contributes to the NADPH binding site. 2 residues coordinate NADPH: Val-284 and Glu-286.

Belongs to the NAD-dependent glycerol-3-phosphate dehydrogenase family.

Its subcellular location is the cytoplasm. It carries out the reaction sn-glycerol 3-phosphate + NAD(+) = dihydroxyacetone phosphate + NADH + H(+). The enzyme catalyses sn-glycerol 3-phosphate + NADP(+) = dihydroxyacetone phosphate + NADPH + H(+). Its pathway is membrane lipid metabolism; glycerophospholipid metabolism. Its function is as follows. Catalyzes the reduction of the glycolytic intermediate dihydroxyacetone phosphate (DHAP) to sn-glycerol 3-phosphate (G3P), the key precursor for phospholipid synthesis. The polypeptide is Glycerol-3-phosphate dehydrogenase [NAD(P)+] (Limosilactobacillus reuteri (strain DSM 20016) (Lactobacillus reuteri)).